The following is a 314-amino-acid chain: Small ribosomal subunit protein uS11m (314 aa).

A mitochondrion-targeting transit peptide spans methionine 1–serine 37. The segment at aspartate 34–serine 138 is disordered. Over residues glutamate 50–isoleucine 63 the composition is skewed to polar residues. Residues serine 103 to proline 114 are compositionally biased toward low complexity.

Belongs to the universal ribosomal protein uS11 family. As to quaternary structure, component of the mitochondrial ribosome small subunit (28S) which comprises a 12S rRNA and about 30 distinct proteins.

The protein localises to the mitochondrion. Required for karyogamy during female gametophyte development, when the two polar nuclei fuse to form the diploid central cell nucleus. In Arabidopsis thaliana (Mouse-ear cress), this protein is Small ribosomal subunit protein uS11m.